We begin with the raw amino-acid sequence, 141 residues long: Plasmatocyte-spreading peptide (141 aa).

Residues 1–22 (MKLTINILFCLILISQYNSANG) form the signal peptide. Residues 23-118 (NLRDLFNNVR…ATGGKDDKGR (96 aa)) constitute a propeptide that is removed on maturation. The span at 46-58 (VKTLFHPSDKSGN) shows a compositional bias: basic and acidic residues. Residues 46–118 (VKTLFHPSDK…ATGGKDDKGR (73 aa)) form a disordered region. Residues 83–98 (PVAVTPAPVVSTTTQA) show a composition bias toward low complexity. Positions 99 to 108 (SAPTVATNGT) are enriched in polar residues. Cysteine 125 and cysteine 137 are joined by a disulfide.

The protein belongs to the GBP/PSP1/paralytic peptide family.

Its function is as follows. Mediates the spreading of plasmatocytes to foreign surfaces. Plasmocytes are a class of hemocytes involved in insect cellular immunity. In Chrysodeixis includens (Soybean looper), this protein is Plasmatocyte-spreading peptide (PSP1).